We begin with the raw amino-acid sequence, 535 residues long: Succinate-semialdehyde dehydrogenase, mitochondrial (535 aa).

Residues M1–Y47 constitute a mitochondrion transit peptide. Position 126 is an N6-acetyllysine; alternate (K126). K126 carries the N6-succinyllysine; alternate modification. N6-succinyllysine is present on residues K135 and K184. Residue T202 to W204 participates in NAD(+) binding. R213 contacts substrate. An NAD(+)-binding site is contributed by K228 to E231. K265 carries the post-translational modification N6-acetyllysine; alternate. N6-succinyllysine; alternate is present on K265. NAD(+) contacts are provided by residues G284–G289 and E306. E306 serves as the catalytic Proton acceptor. R334 contacts substrate. C340 serves as the catalytic Nucleophile. A disulfide bridge connects residues C340 and C342. At K365 the chain carries N6-acetyllysine. K402 carries the post-translational modification N6-succinyllysine. Position 411 is an N6-acetyllysine (K411). E438–F440 contributes to the NAD(+) binding site. S498 serves as a coordination point for substrate. At S499 the chain carries Phosphoserine.

Belongs to the aldehyde dehydrogenase family. In terms of assembly, homotetramer. In terms of tissue distribution, brain, pancreas, heart, liver, skeletal muscle and kidney. Lower in placenta.

It localises to the mitochondrion. The enzyme catalyses succinate semialdehyde + NAD(+) + H2O = succinate + NADH + 2 H(+). The protein operates within amino-acid degradation; 4-aminobutanoate degradation. With respect to regulation, redox-regulated. Inhibited under oxydizing conditions. Inhibited by hydrogen peroxide H(2)O(2). In terms of biological role, catalyzes one step in the degradation of the inhibitory neurotransmitter gamma-aminobutyric acid (GABA). The protein is Succinate-semialdehyde dehydrogenase, mitochondrial of Homo sapiens (Human).